We begin with the raw amino-acid sequence, 372 residues long: Mitogen-activated protein kinase spk1 (372 aa).

A compositionally biased stretch (polar residues) spans 1 to 25 (MASATSTPTIADGNSNKESVATSRS). The interval 1–29 (MASATSTPTIADGNSNKESVATSRSPHTH) is disordered. A Protein kinase domain is found at 39–327 (YEMINLIGQG…AEEALKHPYV (289 aa)). ATP contacts are provided by residues 45 to 53 (IGQGAYGVV) and Lys-68. Asp-163 serves as the catalytic Proton acceptor. A Phosphothreonine modification is found at Thr-199. The TXY motif lies at 199–201 (TEY). Position 201 is a phosphotyrosine (Tyr-201).

The protein belongs to the protein kinase superfamily. CMGC Ser/Thr protein kinase family. MAP kinase subfamily. Mg(2+) serves as cofactor. In terms of processing, dually phosphorylated on Thr-199 and Tyr-201, which activates the enzyme.

It localises to the nucleus. The catalysed reaction is L-seryl-[protein] + ATP = O-phospho-L-seryl-[protein] + ADP + H(+). It catalyses the reaction L-threonyl-[protein] + ATP = O-phospho-L-threonyl-[protein] + ADP + H(+). Its activity is regulated as follows. Activated by tyrosine and threonine phosphorylation. Involved in mating signal transduction pathway. The protein is Mitogen-activated protein kinase spk1 (spk1) of Schizosaccharomyces pombe (strain 972 / ATCC 24843) (Fission yeast).